A 139-amino-acid chain; its full sequence is Holo-[acyl-carrier-protein] synthase (139 aa).

Residues Asp-8 and Glu-61 each contribute to the Mg(2+) site.

It belongs to the P-Pant transferase superfamily. AcpS family. Requires Mg(2+) as cofactor.

Its subcellular location is the cytoplasm. It catalyses the reaction apo-[ACP] + CoA = holo-[ACP] + adenosine 3',5'-bisphosphate + H(+). In terms of biological role, transfers the 4'-phosphopantetheine moiety from coenzyme A to a Ser of acyl-carrier-protein. This is Holo-[acyl-carrier-protein] synthase from Rhodopseudomonas palustris (strain BisB5).